The primary structure comprises 104 residues: MYAVIKTGGKQYRVQEGDTLRVEKINADEGATITLDEVLLVANEDNIQVGAPYIEGGKVSATVKTHGRGEKIRIIKLRRRKHHRKRMGHRQYFTELHIDNISTG.

The protein belongs to the bacterial ribosomal protein bL21 family. Part of the 50S ribosomal subunit. Contacts protein L20.

In terms of biological role, this protein binds to 23S rRNA in the presence of protein L20. In Nitrosococcus oceani (strain ATCC 19707 / BCRC 17464 / JCM 30415 / NCIMB 11848 / C-107), this protein is Large ribosomal subunit protein bL21.